Consider the following 445-residue polypeptide: Argininosuccinate synthase (445 aa).

Residues 17 to 25 and A43 each bind ATP; that span reads AFSGGLDTS. Y99 contacts L-citrulline. Positions 129 and 131 each coordinate ATP. 3 residues coordinate L-aspartate: T131, N135, and D136. N135 serves as a coordination point for L-citrulline. D136 serves as a coordination point for ATP. Positions 139 and 192 each coordinate L-citrulline. An ATP-binding site is contributed by D194. L-citrulline contacts are provided by T201, E203, and E280.

The protein belongs to the argininosuccinate synthase family. Type 2 subfamily. In terms of assembly, homotetramer.

The protein localises to the cytoplasm. It carries out the reaction L-citrulline + L-aspartate + ATP = 2-(N(omega)-L-arginino)succinate + AMP + diphosphate + H(+). It functions in the pathway amino-acid biosynthesis; L-arginine biosynthesis; L-arginine from L-ornithine and carbamoyl phosphate: step 2/3. In Herminiimonas arsenicoxydans, this protein is Argininosuccinate synthase.